We begin with the raw amino-acid sequence, 378 residues long: Succinyl-diaminopimelate desuccinylase (378 aa).

Zn(2+) is bound at residue histidine 66. Residue aspartate 68 is part of the active site. Aspartate 99 is a Zn(2+) binding site. Glutamate 133 (proton acceptor) is an active-site residue. Positions 134, 162, and 348 each coordinate Zn(2+).

This sequence belongs to the peptidase M20A family. DapE subfamily. In terms of assembly, homodimer. Requires Zn(2+) as cofactor. The cofactor is Co(2+).

It carries out the reaction N-succinyl-(2S,6S)-2,6-diaminopimelate + H2O = (2S,6S)-2,6-diaminopimelate + succinate. It functions in the pathway amino-acid biosynthesis; L-lysine biosynthesis via DAP pathway; LL-2,6-diaminopimelate from (S)-tetrahydrodipicolinate (succinylase route): step 3/3. Its function is as follows. Catalyzes the hydrolysis of N-succinyl-L,L-diaminopimelic acid (SDAP), forming succinate and LL-2,6-diaminopimelate (DAP), an intermediate involved in the bacterial biosynthesis of lysine and meso-diaminopimelic acid, an essential component of bacterial cell walls. This chain is Succinyl-diaminopimelate desuccinylase, found in Halorhodospira halophila (strain DSM 244 / SL1) (Ectothiorhodospira halophila (strain DSM 244 / SL1)).